Reading from the N-terminus, the 167-residue chain is UPF0102 protein RB9115 (167 aa).

This sequence belongs to the UPF0102 family.

The sequence is that of UPF0102 protein RB9115 from Rhodopirellula baltica (strain DSM 10527 / NCIMB 13988 / SH1).